Reading from the N-terminus, the 270-residue chain is Cell surface glycoprotein CD200 receptor 4 (270 aa).

The N-terminal stretch at 1–25 (MHALGRIPTLTLLIFINIFVSGSSC) is a signal peptide. An Ig-like V-type domain is found at 26-145 (TDENQTIQND…GNLEKVYDLQ (120 aa)). Over 26–241 (TDENQTIQND…TMTTPRSLLT (216 aa)) the chain is Extracellular. N-linked (GlcNAc...) asparagine glycosylation is found at Asn29 and Asn44. Cystine bridges form between Cys58–Cys129, Cys82–Cys97, Cys164–Cys213, and Cys183–Cys201. One can recognise an Ig-like C2-type domain in the interval 134–229 (PEGNLEKVYD…GNQSLSIELS (96 aa)). Asn192 carries N-linked (GlcNAc...) asparagine glycosylation. Residues 242-262 (ILYVKMALLVIILLNVGFAFF) form a helical membrane-spanning segment. Residues 263–270 (QKRNFART) lie on the Cytoplasmic side of the membrane.

It belongs to the CD200R family. Interacts with TYROBP. In terms of tissue distribution, highly expressed in monocytes, NK cells and a subset of NKT cells. Weakly expressed in granulocytes and B-cells (at protein level). Expressed in brain, lung, testis, thymus, intestine and uterus. Expressed in bone marrow derived-macrophage and dendritic cells and mast cells.

It is found in the membrane. Functionally, involved in the recruitment or surface expression of the TYROBP receptor. The protein is Cell surface glycoprotein CD200 receptor 4 (Cd200r4) of Mus musculus (Mouse).